The sequence spans 333 residues: Phosphate acyltransferase (333 aa).

It belongs to the PlsX family. Homodimer. Probably interacts with PlsY.

Its subcellular location is the cytoplasm. The enzyme catalyses a fatty acyl-[ACP] + phosphate = an acyl phosphate + holo-[ACP]. It functions in the pathway lipid metabolism; phospholipid metabolism. In terms of biological role, catalyzes the reversible formation of acyl-phosphate (acyl-PO(4)) from acyl-[acyl-carrier-protein] (acyl-ACP). This enzyme utilizes acyl-ACP as fatty acyl donor, but not acyl-CoA. In Cellvibrio japonicus (strain Ueda107) (Pseudomonas fluorescens subsp. cellulosa), this protein is Phosphate acyltransferase.